The following is a 155-amino-acid chain: Cytochrome c-type biogenesis protein CcmE (155 aa).

The Cytoplasmic segment spans residues 1–8 (MNPLRKKR). The helical; Signal-anchor for type II membrane protein transmembrane segment at 9–29 (LLIIVALLAGVGLAVTLALSA) threads the bilayer. The Periplasmic portion of the chain corresponds to 30-155 (LQENINLFYT…AASPTPVKQG (126 aa)). Residues histidine 124 and tyrosine 128 each coordinate heme.

It belongs to the CcmE/CycJ family.

It is found in the cell inner membrane. Functionally, heme chaperone required for the biogenesis of c-type cytochromes. Transiently binds heme delivered by CcmC and transfers the heme to apo-cytochromes in a process facilitated by CcmF and CcmH. The chain is Cytochrome c-type biogenesis protein CcmE from Pseudomonas syringae pv. syringae (strain B728a).